Consider the following 181-residue polypeptide: Adenylyl-sulfate kinase (181 aa).

ATP is bound at residue 13 to 20 (GVSGAGKS). Catalysis depends on serine 87, which acts as the Phosphoserine intermediate.

This sequence belongs to the APS kinase family.

It catalyses the reaction adenosine 5'-phosphosulfate + ATP = 3'-phosphoadenylyl sulfate + ADP + H(+). The protein operates within sulfur metabolism; hydrogen sulfide biosynthesis; sulfite from sulfate: step 2/3. Catalyzes the synthesis of activated sulfate. This chain is Adenylyl-sulfate kinase, found in Burkholderia ambifaria (strain ATCC BAA-244 / DSM 16087 / CCUG 44356 / LMG 19182 / AMMD) (Burkholderia cepacia (strain AMMD)).